We begin with the raw amino-acid sequence, 641 residues long: Bifunctional protein glk (641 aa).

A glucokinase region spans residues 1–340 (MSTGAQTKAA…QLSNRTGGAS (340 aa)). 23–28 (ADVGGT) provides a ligand contact to ATP. The HTH rpiR-type domain maps to 341-417 (SAVFERIRQM…LKLATGLTGT (77 aa)). The tract at residues 341-641 (SAVFERIRQM…SHGAAPAAKD (301 aa)) is putative HTH-type transcriptional regulator. Positions 377–396 (IVDIARKADVSQPTVIRFCR) form a DNA-binding region, H-T-H motif. The 140-residue stretch at 461–600 (AIDILNNARR…AVGVAIRRAA (140 aa)) folds into the SIS domain. Residues 576–596 (SMISRILHLVMIDILAVGVAI) form a helical membrane-spanning segment.

It in the N-terminal section; belongs to the bacterial glucokinase family.

Its subcellular location is the membrane. It catalyses the reaction D-glucose + ATP = D-glucose 6-phosphate + ADP + H(+). The protein is Bifunctional protein glk (glk) of Burkholderia pseudomallei (strain 1710b).